The primary structure comprises 217 residues: Dense granule protein 1 (217 aa).

The N-terminal stretch at 1-19 (MARQATFIVALCVCGLAIA) is a signal peptide. Residues 171–183 (VASEDSALGNSEE) are compositionally biased toward polar residues. Residues 171 to 217 (VASEDSALGNSEEQYVEGTVNGSSDPEQERAGGPLIPEGDEQEVDTE) form a disordered region. An N-linked (GlcNAc...) asparagine glycan is attached at Asn-191. Over residues 208–217 (EGDEQEVDTE) the composition is skewed to acidic residues.

This sequence belongs to the Gra7 family.

Its subcellular location is the secreted. This chain is Dense granule protein 1 (DG1), found in Neospora caninum (Coccidian parasite).